The sequence spans 239 residues: Large ribosomal subunit protein uL1 (239 aa).

It belongs to the universal ribosomal protein uL1 family. As to quaternary structure, part of the 50S ribosomal subunit.

Functionally, binds directly to 23S rRNA. The L1 stalk is quite mobile in the ribosome, and is involved in E site tRNA release. Protein L1 is also a translational repressor protein, it controls the translation of the L11 operon by binding to its mRNA. The sequence is that of Large ribosomal subunit protein uL1 from Rickettsia akari (strain Hartford).